The primary structure comprises 422 residues: Trichothecene biosynthesis transcription regulator TRI10 (422 aa).

Belongs to the TRI10 transcription regulator family.

The protein resides in the nucleus. In terms of biological role, transcriptional activator of all of the trichothecene biosynthesis genes. Acts upstream of the cluster-encoded transcription factor TRI6 and is necessary for full expression of both the other trichothecene genes and the genes for the primary metabolic pathway that precedes the trichothecene biosynthetic pathway. The chain is Trichothecene biosynthesis transcription regulator TRI10 from Trichoderma arundinaceum.